A 242-amino-acid chain; its full sequence is DNA repair protein RecO (242 aa).

It belongs to the RecO family. Monomer.

Functionally, involved in DNA repair and RecF pathway recombination. The protein is DNA repair protein RecO of Shigella flexneri serotype 5b (strain 8401).